The following is a 117-amino-acid chain: MGWSCIILFLVATATGVHSQVQLQQPGAELVRPGSSVKLSCKASGYTFTSYWMDWVKQRPGQGLEWIGNIYPSDSETHYNQKFKDKATLTVDKSSSTAYMQLSSLTSEDSAVYYCAR.

The N-terminal stretch at 1-19 (MGWSCIILFLVATATGVHS) is a signal peptide. The tract at residues 20–49 (QVQLQQPGAELVRPGSSVKLSCKASGYTFT) is framework-1. Cys41 and Cys115 are oxidised to a cystine. The interval 50–54 (SYWMD) is complementarity-determining-1. The segment at 55 to 68 (WVKQRPGQGLEWIG) is framework-2. The complementarity-determining-2 stretch occupies residues 69–85 (NIYPSDSETHYNQKFKD). The segment at 86-117 (KATLTVDKSSSTAYMQLSSLTSEDSAVYYCAR) is framework-3.

In Mus musculus (Mouse), this protein is Ig heavy chain V region 3 (Ighv1-61).